Consider the following 1019-residue polypeptide: Sca1 complex protein phr (1019 aa).

Disordered regions lie at residues 89-118 (IVIN…SSNF), 131-202 (AFNN…INNN), 265-287 (QQLN…NSAN), and 512-546 (STNN…TNNL). Low complexity predominate over residues 93 to 102 (SSSSSSSSSS). Residues 141 to 155 (NRKEKEKDKDKDHQD) are compositionally biased toward basic and acidic residues. The stretch at 158-188 (NINNINNINNNINNNINNNNNNNNNNNNNNN) forms a coiled coil. Positions 158 to 202 (NINNINNINNNINNNINNNNNNNNNNNNNNNMHNPTSSSPSINNN) are enriched in low complexity. One can recognise a PH domain in the interval 735-836 (EIKKKGYLFK…WIKAIKFNCF (102 aa)). Residues 860-872 (VAGSGSNNGNNNG) are compositionally biased toward low complexity. Disordered regions lie at residues 860-890 (VAGS…GSFI), 904-951 (NLSI…QQQL), and 977-1019 (SSYT…SKLK). A compositionally biased stretch (polar residues) spans 879–890 (TTQQLNNSGSFI). Positions 977 to 986 (SSYTDSMSGS) are enriched in low complexity. A compositionally biased stretch (polar residues) spans 987 to 1019 (PPDSNGQVFPQSPQLKKTLFQRTTSFSKGSKLK).

Component of the Sca1 complex composed of at least gefA, gefH, scaA, phr, and the protein phosphatase 2A subunits pppA and pho2B. Interacts directly with gefH.

The protein resides in the cell membrane. Its function is as follows. Component of the Sca1 complex, a regulator of cell motility, chemotaxis and signal relay. The Sca1 complex is recruited to the plasma membrane in a chemoattractant- and F-actin-dependent manner and is enriched at the leading edge of chemotaxing cells where it regulates F-actin dynamics and signal relay by controlling the activation of rasC and the downstream target of rapamycin complex 2 (TORC2)-Akt/protein kinase B (PKB) pathway. This chain is Sca1 complex protein phr, found in Dictyostelium discoideum (Social amoeba).